The sequence spans 335 residues: Glucokinase (335 aa).

ATP is bound at residue 11–16 (ADIGGT).

Belongs to the bacterial glucokinase family.

It is found in the cytoplasm. The enzyme catalyses D-glucose + ATP = D-glucose 6-phosphate + ADP + H(+). The polypeptide is Glucokinase (Stenotrophomonas maltophilia (strain K279a)).